Here is a 546-residue protein sequence, read N- to C-terminus: Chromosomal replication initiator protein DnaA (546 aa).

The domain I, interacts with DnaA modulators stretch occupies residues M1–R85. The segment at R85–K204 is domain II. The span at P96–Q111 shows a compositional bias: pro residues. A disordered region spans residues P96–K209. Residues Q126–P145 show a composition bias toward low complexity. Positions I191 to K209 are enriched in basic and acidic residues. The tract at residues S205–S421 is domain III, AAA+ region. Positions 249, 251, 252, and 253 each coordinate ATP. Positions S422–R546 are domain IV, binds dsDNA.

It belongs to the DnaA family. Oligomerizes as a right-handed, spiral filament on DNA at oriC.

The protein localises to the cytoplasm. Functionally, plays an essential role in the initiation and regulation of chromosomal replication. ATP-DnaA binds to the origin of replication (oriC) to initiate formation of the DNA replication initiation complex once per cell cycle. Binds the DnaA box (a 9 base pair repeat at the origin) and separates the double-stranded (ds)DNA. Forms a right-handed helical filament on oriC DNA; dsDNA binds to the exterior of the filament while single-stranded (ss)DNA is stabiized in the filament's interior. The ATP-DnaA-oriC complex binds and stabilizes one strand of the AT-rich DNA unwinding element (DUE), permitting loading of DNA polymerase. After initiation quickly degrades to an ADP-DnaA complex that is not apt for DNA replication. Binds acidic phospholipids. The sequence is that of Chromosomal replication initiator protein DnaA from Corynebacterium aurimucosum (strain ATCC 700975 / DSM 44827 / CIP 107346 / CN-1) (Corynebacterium nigricans).